Reading from the N-terminus, the 692-residue chain is Methionine--tRNA ligase (692 aa).

Positions 12–22 (PYANGPLHLGH) match the 'HIGH' region motif. Zn(2+) is bound by residues Cys143, Cys146, Cys156, and Cys159. The 'KMSKS' region motif lies at 330 to 334 (KMSKS). An ATP-binding site is contributed by Lys333. Positions 554 to 563 (AAAAPAAKPA) are enriched in low complexity. Residues 554–575 (AAAAPAAKPAAPAPAPAPAKDE) are disordered. The 104-residue stretch at 589-692 (DFAKLDLRIG…SGAQPGMPVR (104 aa)) folds into the tRNA-binding domain.

This sequence belongs to the class-I aminoacyl-tRNA synthetase family. MetG type 1 subfamily. Homodimer. The cofactor is Zn(2+).

The protein resides in the cytoplasm. It carries out the reaction tRNA(Met) + L-methionine + ATP = L-methionyl-tRNA(Met) + AMP + diphosphate. In terms of biological role, is required not only for elongation of protein synthesis but also for the initiation of all mRNA translation through initiator tRNA(fMet) aminoacylation. This is Methionine--tRNA ligase from Stenotrophomonas maltophilia (strain K279a).